The chain runs to 362 residues: NAD(P)H-quinone oxidoreductase subunit 1, chloroplastic (362 aa).

A run of 8 helical transmembrane segments spans residues 29–49, 103–123, 128–148, 164–184, 202–222, 247–267, 303–323, and 335–355; these read ILPI…IVWL, IAVI…HFVL, IGVF…LMAG, AAQS…ISLL, FFGW…ISSL, YSGI…LVSS, TMGI…SITI, and LLNL…LLTT.

Belongs to the complex I subunit 1 family. NDH is composed of at least 16 different subunits, 5 of which are encoded in the nucleus.

It is found in the plastid. The protein localises to the chloroplast thylakoid membrane. The catalysed reaction is a plastoquinone + NADH + (n+1) H(+)(in) = a plastoquinol + NAD(+) + n H(+)(out). It carries out the reaction a plastoquinone + NADPH + (n+1) H(+)(in) = a plastoquinol + NADP(+) + n H(+)(out). NDH shuttles electrons from NAD(P)H:plastoquinone, via FMN and iron-sulfur (Fe-S) centers, to quinones in the photosynthetic chain and possibly in a chloroplast respiratory chain. The immediate electron acceptor for the enzyme in this species is believed to be plastoquinone. Couples the redox reaction to proton translocation, and thus conserves the redox energy in a proton gradient. This chain is NAD(P)H-quinone oxidoreductase subunit 1, chloroplastic, found in Triticum aestivum (Wheat).